Reading from the N-terminus, the 37-residue chain is Large ribosomal subunit protein bL36c (37 aa).

This sequence belongs to the bacterial ribosomal protein bL36 family.

It localises to the plastid. The protein resides in the chloroplast. The protein is Large ribosomal subunit protein bL36c of Welwitschia mirabilis (Tree tumbo).